A 474-amino-acid chain; its full sequence is Probable glycine dehydrogenase (decarboxylating) subunit 2 (474 aa).

Lysine 266 is subject to N6-(pyridoxal phosphate)lysine.

The protein belongs to the GcvP family. C-terminal subunit subfamily. As to quaternary structure, the glycine cleavage system is composed of four proteins: P, T, L and H. In this organism, the P 'protein' is a heterodimer of two subunits. Pyridoxal 5'-phosphate serves as cofactor.

The enzyme catalyses N(6)-[(R)-lipoyl]-L-lysyl-[glycine-cleavage complex H protein] + glycine + H(+) = N(6)-[(R)-S(8)-aminomethyldihydrolipoyl]-L-lysyl-[glycine-cleavage complex H protein] + CO2. Functionally, the glycine cleavage system catalyzes the degradation of glycine. The P protein binds the alpha-amino group of glycine through its pyridoxal phosphate cofactor; CO(2) is released and the remaining methylamine moiety is then transferred to the lipoamide cofactor of the H protein. This Thermus thermophilus (strain ATCC 27634 / DSM 579 / HB8) protein is Probable glycine dehydrogenase (decarboxylating) subunit 2.